The chain runs to 247 residues: Uridylate kinase (247 aa).

18-21 (KLSG) is a binding site for ATP. Gly-60 is a UMP binding site. ATP is bound by residues Gly-61 and Arg-65. Residues Asp-80 and 141–148 (TGNPFFTT) contribute to the UMP site. ATP contacts are provided by Thr-168, Tyr-174, and Asp-177.

This sequence belongs to the UMP kinase family. Homohexamer.

The protein localises to the cytoplasm. The enzyme catalyses UMP + ATP = UDP + ADP. The protein operates within pyrimidine metabolism; CTP biosynthesis via de novo pathway; UDP from UMP (UMPK route): step 1/1. Its activity is regulated as follows. Inhibited by UTP. In terms of biological role, catalyzes the reversible phosphorylation of UMP to UDP. In Ectopseudomonas mendocina (strain ymp) (Pseudomonas mendocina), this protein is Uridylate kinase.